The chain runs to 234 residues: Hydrolase in agr operon (234 aa).

One can recognise a CN hydrolase domain in the interval 1-212 (ILYNKDTDVV…EKELTVTIDI (212 aa)). The Proton acceptor role is filled by glutamate 14. The active-site Proton donor is lysine 83. Residue cysteine 119 is the Nucleophile of the active site.

Belongs to the carbon-nitrogen hydrolase superfamily. NIT1/NIT2 family.

In Staphylococcus lugdunensis, this protein is Hydrolase in agr operon.